Here is a 207-residue protein sequence, read N- to C-terminus: Guanylate kinase (207 aa).

A Guanylate kinase-like domain is found at 4 to 184 (GILFIISAPS…AINDLRTIII (181 aa)). 11-18 (APSGTGKS) provides a ligand contact to ATP.

This sequence belongs to the guanylate kinase family.

It is found in the cytoplasm. The catalysed reaction is GMP + ATP = GDP + ADP. In terms of biological role, essential for recycling GMP and indirectly, cGMP. This chain is Guanylate kinase, found in Buchnera aphidicola subsp. Schizaphis graminum (strain Sg).